A 522-amino-acid polypeptide reads, in one-letter code: MGKIKRRAITEHEKRALRHYFFQLQNRSGQQDLIEWFREKFGKDISQPSVSQILSSKYSYLDNTVEKPWDVKRNRPPKYPLLEAALFEWQVQQGDDATLSGETIKRAAAILWHKIPEYQDQPVPNFSNGWLEGFRKRHILHAINEQPTESVVLNNTEPPNDPLSRVYDVTRLTNINDIFTMQETGLFWKLVPNGTPEVEDIKGITRFKARITLTVCCNASGTERLPLWVIGYSQSPRVFRAANVKPEVMNFKWRSNGKASMTTAIMEEWLRWFDACMEGRKVILLIDSYTPHLRAVENIRNSGNDLRNTTVITLPSTSASISQPCSEGVIYALKACYRKHWVQYILEQNELGRNPYNTTNVLRAILWLVKAWTTDISPEIIENAFNLSGVLGLFNESAVTSRALDEMIHPLRELVSEFSVQAAMRIEDFISPSEENIVDSSEDIINQIASQYMDDRAFETDEEESTEFQITTKDAMKAIELLLNYEAQQPDGNPAITISLLNYQKLLEARGGNVNLSRLRST.

Residues 70–144 (DVKRNRPPKY…RKRHILHAIN (75 aa)) form the HTH CENPB-type domain. Position 460 is a phosphothreonine (Thr-460).

As to quaternary structure, interacts with mcm10.

The protein localises to the nucleus. Binds, preferentially, to the Maundrell ARS consensus sequence within ARS3002. This chain is ARS-binding protein 1 (abp1), found in Schizosaccharomyces pombe (strain 972 / ATCC 24843) (Fission yeast).